Reading from the N-terminus, the 318-residue chain is Lysophospholipase D GDPD3 (318 aa).

Topologically, residues 1–2 are cytoplasmic; the sequence is MS. Residues 3–23 traverse the membrane as a helical segment; sequence LLLYYALPALGSYAMLSIFFL. The Extracellular portion of the chain corresponds to 24-198; that stretch reads RRPHLLHTPR…KAANPEMPLS (175 aa). The GP-PDE domain maps to 39–308; sequence IRLGAHRGGS…DYPTALRHYL (270 aa). A divalent metal cation-binding residues include E71, D73, and H86. The helical transmembrane segment at 199 to 221 threads the bilayer; it reads FTISRGFWVLLSYYLGLLPFIPI. Over 222–318 the chain is Cytoplasmic; that stretch reads PEKFFFCFLP…DNHGPAARTS (97 aa).

It belongs to the glycerophosphoryl diester phosphodiesterase family. Widely expressed, with high level in kidney and ovary.

The protein localises to the membrane. It is found in the cytoplasm. It localises to the perinuclear region. The protein resides in the endoplasmic reticulum. The enzyme catalyses 1-hexadecanoyl-sn-glycero-3-phosphocholine + H2O = 1-hexadecanoyl-sn-glycero-3-phosphate + choline + H(+). The catalysed reaction is 1-hexadecanoyl-sn-glycero-3-phosphocholine + H2O = sn-glycerol 3-phosphocholine + hexadecanoate + H(+). It catalyses the reaction 1-O-(1Z-octadecenyl)-sn-glycero-3-phospho-N-hexadecanoyl-ethanolamine + H2O = 1-O-(1Z-octadecenyl)-sn-glycero-3-phosphate + N-hexadecanoylethanolamine + H(+). It carries out the reaction N-(5Z,8Z,11Z,14Z-eicosatetraenoyl)-1-(9Z-octadecenoyl)-sn-glycero-3-phosphoethanolamine + H2O = N-(5Z,8Z,11Z,14Z-eicosatetraenoyl)-ethanolamine + 1-(9Z-octadecenoyl)-sn-glycero-3-phosphate + H(+). The enzyme catalyses N,1-di-(9Z-octadecenoyl)-sn-glycero-3-phosphoethanolamine + H2O = N-(9Z-octadecenoyl) ethanolamine + 1-(9Z-octadecenoyl)-sn-glycero-3-phosphate + H(+). The catalysed reaction is N-hexadecanoyl-1-(9Z-octadecenoyl)-sn-glycero-3-phosphoethanolamine + H2O = N-hexadecanoylethanolamine + 1-(9Z-octadecenoyl)-sn-glycero-3-phosphate + H(+). It catalyses the reaction 1-O-hexadecyl-sn-glycero-3-phosphocholine + H2O = 1-O-hexadecyl-sn-glycero-3-phosphate + choline + H(+). Lysophospholipase D activity is stimulated by calcium. Loss of lysophospholipase D activity in presence of EDTA. Its function is as follows. Hydrolyzes lysoglycerophospholipids to produce lysophosphatidic acid (LPA) and the corresponding amines. Shows a preference for 1-O-alkyl-sn-glycero-3-phosphocholine (lyso-PAF), lysophosphatidylcholine (lyso-PC) and N-acylethanolamine lysophospholipids. Does not display glycerophosphodiester phosphodiesterase activity, since it cannot hydrolyze either glycerophosphoinositol or glycerophosphocholine. The polypeptide is Lysophospholipase D GDPD3 (Homo sapiens (Human)).